We begin with the raw amino-acid sequence, 455 residues long: tRNA modification GTPase MnmE (455 aa).

Arg26, Glu86, and Arg125 together coordinate (6S)-5-formyl-5,6,7,8-tetrahydrofolate. Positions 222-376 (GLKTAIIGRP…VEEKINQIFF (155 aa)) constitute a TrmE-type G domain. K(+) is bound at residue Asn232. Residues 232 to 237 (NVGKSS), 251 to 257 (TDIAGTT), and 276 to 279 (DTAG) contribute to the GTP site. Ser236 is a binding site for Mg(2+). Positions 251, 253, and 256 each coordinate K(+). Residue Thr257 participates in Mg(2+) binding. Position 455 (Lys455) interacts with (6S)-5-formyl-5,6,7,8-tetrahydrofolate.

It belongs to the TRAFAC class TrmE-Era-EngA-EngB-Septin-like GTPase superfamily. TrmE GTPase family. In terms of assembly, homodimer. Heterotetramer of two MnmE and two MnmG subunits. Requires K(+) as cofactor.

The protein localises to the cytoplasm. Functionally, exhibits a very high intrinsic GTPase hydrolysis rate. Involved in the addition of a carboxymethylaminomethyl (cmnm) group at the wobble position (U34) of certain tRNAs, forming tRNA-cmnm(5)s(2)U34. The sequence is that of tRNA modification GTPase MnmE from Lactococcus lactis subsp. cremoris (strain SK11).